Here is a 349-residue protein sequence, read N- to C-terminus: MSALSGKVQTVLGPIEPDQLGRTMTHEHLTMTFECCYFSPAPGDETVAQAPIQMKNLFWLKQNPYSSHENLLLLQETNAVREELHEYRKAGGGTIVENTTQGIARDLPCLKQLAKESGVHIIGGAGYYVDATHSEATRKMTVEKLTDIIISEVLHGADGTEIRCGVIGEIGCSWPITDSEKKVLQATAHAQTELGCPVIIHPGRNPGAPAEIVRLLQEAGGDISKTVMSHLDRTIFDNGELLEFAKMGSYLEYDLFGMETLNYAYNLEVDMPSDSQRVKALAFLVQEGYEDNIVIAHDIHTKNRLTKYGGHGYSHILKNIVPKMLKRGINQTQVDKILIDNPKRWLTFK.

Residues His-26, His-28, Glu-169, His-201, His-230, and Asp-298 each contribute to the a divalent metal cation site.

It belongs to the metallo-dependent hydrolases superfamily. Phosphotriesterase family. The cofactor is a divalent metal cation.

Its subcellular location is the cytoplasm. The protein localises to the cytosol. It catalyses the reaction N-acetyltaurine + H2O = taurine + acetate. The catalysed reaction is N-propanoyltaurine + H2O = propanoate + taurine. The enzyme catalyses N-acetyl-L-methionine + H2O = L-methionine + acetate. It carries out the reaction N-acetyl-L-isoleucine + H2O = L-isoleucine + acetate. It catalyses the reaction N-acetyl-L-leucine + H2O = L-leucine + acetate. The catalysed reaction is N-acetyl-L-valine + H2O = L-valine + acetate. In terms of biological role, N-acetyltaurine hydrolase that catalyzes the hydrolysis of N-acetyltaurine into taurine and acetate. PTER also acts on other N-acetyl amino acids (Met, Ile, Leu, Val) and N-propionyltaurine, but at lower rates. The sequence is that of N-acetyltaurine hydrolase (pter) from Salmo salar (Atlantic salmon).